The following is a 138-amino-acid chain: ATP synthase epsilon chain (138 aa).

It belongs to the ATPase epsilon chain family. F-type ATPases have 2 components, CF(1) - the catalytic core - and CF(0) - the membrane proton channel. CF(1) has five subunits: alpha(3), beta(3), gamma(1), delta(1), epsilon(1). CF(0) has three main subunits: a, b and c.

Its subcellular location is the cell membrane. Its function is as follows. Produces ATP from ADP in the presence of a proton gradient across the membrane. This is ATP synthase epsilon chain from Streptococcus pyogenes serotype M2 (strain MGAS10270).